The chain runs to 149 residues: Transcriptional repressor NrdR (149 aa).

Residues 3-34 (CPFCDTEETKVIDSRLVSDGYQVRRRRECGHC) fold into a zinc finger. In terms of domain architecture, ATP-cone spans 49-139 (PKIIKTDGTR…VYLSFDDIDQ (91 aa)).

This sequence belongs to the NrdR family. It depends on Zn(2+) as a cofactor.

Functionally, negatively regulates transcription of bacterial ribonucleotide reductase nrd genes and operons by binding to NrdR-boxes. This is Transcriptional repressor NrdR from Haemophilus influenzae (strain 86-028NP).